A 130-amino-acid chain; its full sequence is Small ribosomal subunit protein uS9 (130 aa).

Belongs to the universal ribosomal protein uS9 family.

This Nitrosospira multiformis (strain ATCC 25196 / NCIMB 11849 / C 71) protein is Small ribosomal subunit protein uS9.